Consider the following 57-residue polypeptide: Small ribosomal subunit protein bS21 (57 aa).

The disordered stretch occupies residues 34–57; that stretch reads RKEHYIKPSVQKKNRQKNMRSKKR. Over residues 43-57 the composition is skewed to basic residues; it reads VQKKNRQKNMRSKKR.

It belongs to the bacterial ribosomal protein bS21 family.

This Aster yellows witches'-broom phytoplasma (strain AYWB) protein is Small ribosomal subunit protein bS21.